Here is a 346-residue protein sequence, read N- to C-terminus: Flap endonuclease 1 (346 aa).

Residues 1-102 are N-domain; sequence MGVTELGKLI…LEIEQRKKAK (102 aa). Mg(2+)-binding residues include Asp31, Asp84, Glu156, Glu158, Asp177, Asp179, and Asp239. The interval 120-261 is I-domain; that stretch reads DVAKYAKRAI…KALKLIWEFG (142 aa).

This sequence belongs to the XPG/RAD2 endonuclease family. FEN1 subfamily. As to quaternary structure, interacts with PCNA. PCNA stimulates the nuclease activity without altering cleavage specificity. It depends on Mg(2+) as a cofactor.

Its function is as follows. Structure-specific nuclease with 5'-flap endonuclease and 5'-3' exonuclease activities involved in DNA replication and repair. During DNA replication, cleaves the 5'-overhanging flap structure that is generated by displacement synthesis when DNA polymerase encounters the 5'-end of a downstream Okazaki fragment. Binds the unpaired 3'-DNA end and kinks the DNA to facilitate 5' cleavage specificity. Cleaves one nucleotide into the double-stranded DNA from the junction in flap DNA, leaving a nick for ligation. Also involved in the base excision repair (BER) pathway. Acts as a genome stabilization factor that prevents flaps from equilibrating into structures that lead to duplications and deletions. Also possesses 5'-3' exonuclease activity on nicked or gapped double-stranded DNA. In Pyrobaculum calidifontis (strain DSM 21063 / JCM 11548 / VA1), this protein is Flap endonuclease 1.